Consider the following 230-residue polypeptide: GDT1-like protein 4 (230 aa).

Transmembrane regions (helical) follow at residues 12 to 32, 39 to 59, 71 to 91, 135 to 155, 175 to 195, and 207 to 227; these read LAMT…AILA, LVLA…ATLG, THHI…WDGF, AFLT…NFFG, FGVV…AVIG, and IVAL…YLTS.

Belongs to the GDT1 family.

It is found in the membrane. This Arabidopsis thaliana (Mouse-ear cress) protein is GDT1-like protein 4.